Reading from the N-terminus, the 54-residue chain is Large ribosomal subunit protein bL33 (54 aa).

This sequence belongs to the bacterial ribosomal protein bL33 family.

The chain is Large ribosomal subunit protein bL33 from Parafrankia sp. (strain EAN1pec).